Consider the following 810-residue polypeptide: Transmembrane channel-like protein 6 (810 aa).

Residues 1–26 are disordered; that stretch reads MAQSLALALDVPETTGDEGLEPSPYE. At 1-205 the chain is on the lumenal side; that stretch reads MAQSLALALD…GAFSCCSRLR (205 aa). The span at 15-26 shows a compositional bias: acidic residues; the sequence is TGDEGLEPSPYE. Thr-88 is modified (phosphothreonine). Arg-93 is subject to Omega-N-methylarginine. Asn-102 carries N-linked (GlcNAc...) asparagine glycosylation. Thr-104 bears the Phosphothreonine mark. Phosphoserine is present on Ser-136. The chain crosses the membrane as a helical span at residues 206–226; the sequence is YTCMLALHSLGLALLSGLYAA. Topologically, residues 227–253 are cytoplasmic; that stretch reads RPWRYALKQIGGQFGSSVLSYFLFLKT. Residues 254–274 form a helical membrane-spanning segment; that stretch reads LLAFNALMLLPLLAFLVGVQA. At 275-338 the chain is on the lumenal side; that stretch reads AFPPDPAGPV…PRLGSLPYNM (64 aa). Asn-311 carries an N-linked (GlcNAc...) asparagine glycan. A helical transmembrane segment spans residues 339-359; the sequence is PLAYLFTMGATFFLTCIILVY. At 360–429 the chain is on the cytoplasmic side; sequence SMSHSFGESY…PRSVCGQLRQ (70 aa). A helical transmembrane segment spans residues 430-450; the sequence is VVVLGLGWLLCLGSTMGCTVA. The Lumenal portion of the chain corresponds to 451 to 468; that stretch reads VLTFSEVMIQRPASGGQG. The chain crosses the membrane as a helical span at residues 469–489; sequence VEALALPLVVSVLNLGASYLF. Topologically, residues 490–504 are cytoplasmic; it reads RGLATLERHDSPVLE. Residues 505–525 traverse the membrane as a helical segment; sequence VYMAICRNLILKMAVLGVLCY. Over 526-552 the chain is Lumenal; sequence HWLGRRVATLQGQCWEDFVGQELYRFM. A helical transmembrane segment spans residues 553-573; the sequence is VVDFIFMLLDSLFGELVWRLI. Topologically, residues 574–603 are cytoplasmic; sequence SEKKLKRGQKPEFDIARNVLDLIYGQTLTW. The chain crosses the membrane as a helical span at residues 604–624; sequence LGVLFSPLLPAVQILRLLFLF. Topologically, residues 625–649 are lumenal; that stretch reads HIKKASLMANCQAPRRPWLASHMST. The chain crosses the membrane as a helical span at residues 650-670; it reads VFLTLLCFPSFLGAAVFLCYA. Over 671-721 the chain is Cytoplasmic; the sequence is VWQVRPSSTCGPFRTLNTMYEAGTVWVRRLEHAGSGASWLPWLHHFLVENT. A helical transmembrane segment spans residues 722–742; the sequence is FFLFLASALLLAVIYFNIQVV. Residues 743-810 are Lumenal-facing; that stretch reads KGQRKVICLL…QKEPCNPRSP (68 aa). Positions 775–810 are disordered; it reads EEEGRSRPGRTQDATEPPAWHEDGGDQKEPCNPRSP. Over residues 793-810 the composition is skewed to basic and acidic residues; that stretch reads AWHEDGGDQKEPCNPRSP.

This sequence belongs to the TMC family. In terms of assembly, interacts with TMC8. Interacts and forms a complex with TMC8 and CIB1; the interaction stabilizes each component of the complex. Interacts and forms a complex with TMC8 and SLC30A1/ZNT1; the interaction regulates zinc transport into the ER. In terms of tissue distribution, widely expressed. Highly expressed in thymus, lung and spleen. Expressed in lymphocytes and peripheral lymphocytes. Expressed in small and medium dorsal root ganglion (DRG) neurons.

The protein resides in the endoplasmic reticulum membrane. Acts as a regulatory protein involved in the regulation of numerous cellular processes. Together with its homolog TMC8/EVER2, forms a complex with calcium-binding protein CIB1 in lymphocytes and keratynocytes where TMC6 and TMC8 stabilize CIB1 and reciprocally. Together with TMC8, also forms a complex with and activates zinc transporter ZNT1 at the ER membrane of keratynocytes, thereby facilitating zinc uptake into the ER. Down-regulates the activity of transcription factors induced by zinc and cytokines. Also plays a role in thermal sensation by inhibiting the M-channel (KCNQ2-KCNQ3 channel) current in primary sensory neurons. This chain is Transmembrane channel-like protein 6, found in Mus musculus (Mouse).